A 336-amino-acid polypeptide reads, in one-letter code: NADH-quinone oxidoreductase subunit H (336 aa).

8 helical membrane passes run 12-32, 84-104, 118-138, 156-176, 193-213, 247-267, 274-294, and 313-333; these read FLKI…LTWF, VVMA…GPGF, VNIA…GTIF, AAVV…VILL, GVWF…CMLA, LAEW…LFFG, IFGP…LVFF, and IAWK…AVVV.

This sequence belongs to the complex I subunit 1 family. NDH-1 is composed of 14 different subunits. Subunits NuoA, H, J, K, L, M, N constitute the membrane sector of the complex.

It is found in the cell inner membrane. It catalyses the reaction a quinone + NADH + 5 H(+)(in) = a quinol + NAD(+) + 4 H(+)(out). In terms of biological role, NDH-1 shuttles electrons from NADH, via FMN and iron-sulfur (Fe-S) centers, to quinones in the respiratory chain. The immediate electron acceptor for the enzyme in this species is believed to be ubiquinone. Couples the redox reaction to proton translocation (for every two electrons transferred, four hydrogen ions are translocated across the cytoplasmic membrane), and thus conserves the redox energy in a proton gradient. This subunit may bind ubiquinone. The chain is NADH-quinone oxidoreductase subunit H from Aquifex aeolicus (strain VF5).